The sequence spans 121 residues: Large ribosomal subunit protein bL19 (121 aa).

The protein belongs to the bacterial ribosomal protein bL19 family.

Functionally, this protein is located at the 30S-50S ribosomal subunit interface and may play a role in the structure and function of the aminoacyl-tRNA binding site. The polypeptide is Large ribosomal subunit protein bL19 (Mesomycoplasma hyopneumoniae (strain 7448) (Mycoplasma hyopneumoniae)).